A 294-amino-acid chain; its full sequence is Putative glucose-6-phosphate 1-epimerase (294 aa).

Residues R74 and R99 each coordinate substrate. The active site involves H164. D208 lines the substrate pocket. The active site involves E267.

Belongs to the glucose-6-phosphate 1-epimerase family. Monomer in solution.

It catalyses the reaction alpha-D-glucose 6-phosphate = beta-D-glucose 6-phosphate. In Escherichia coli (strain K12), this protein is Putative glucose-6-phosphate 1-epimerase (yeaD).